Consider the following 980-residue polypeptide: Hypoxia up-regulated protein 1 (980 aa).

A signal peptide spans 1–24 (MREKLSLWAIFCLVVAFLPSQTES). Disordered regions lie at residues 558-682 (EEES…DIAV) and 894-980 (KPKP…EDEL). Composition is skewed to basic and acidic residues over residues 599 to 656 (AGKE…PEEK) and 896 to 906 (KPKDKAKDKNS). A compositionally biased stretch (polar residues) spans 907-916 (TSESSKANST). Composition is skewed to basic and acidic residues over residues 918-949 (DAEK…KAEE) and 960-980 (TDDK…EDEL). The short motif at 977–980 (EDEL) is the Prevents secretion from ER element.

This sequence belongs to the heat shock protein 70 family.

It is found in the endoplasmic reticulum lumen. Functionally, has a pivotal role in cytoprotective cellular mechanisms triggered by oxygen deprivation. May play a role as a molecular chaperone and participate in protein folding. This chain is Hypoxia up-regulated protein 1 (hyou1), found in Danio rerio (Zebrafish).